A 306-amino-acid polypeptide reads, in one-letter code: Curved DNA-binding protein (306 aa).

The 65-residue stretch at 5–69 (DYYAIMGVKP…QRRAEYDQLW (65 aa)) folds into the J domain.

It is found in the cytoplasm. The protein resides in the nucleoid. Its function is as follows. DNA-binding protein that preferentially recognizes a curved DNA sequence. It is probably a functional analog of DnaJ; displays overlapping activities with DnaJ, but functions under different conditions, probably acting as a molecular chaperone in an adaptive response to environmental stresses other than heat shock. Lacks autonomous chaperone activity; binds native substrates and targets them for recognition by DnaK. Its activity is inhibited by the binding of CbpM. The sequence is that of Curved DNA-binding protein from Salmonella paratyphi A (strain ATCC 9150 / SARB42).